We begin with the raw amino-acid sequence, 521 residues long: Non-specific phospholipase C5 (521 aa).

Positions 478-487 (SKKARERGGD) are enriched in basic and acidic residues. The segment at 478 to 521 (SKKARERGGDENDIVFCVDDDDDHNVVKPPPSQSEPSHATPWSN) is disordered. Positions 511-521 (SEPSHATPWSN) are enriched in polar residues.

It belongs to the bacterial phospholipase C family. Specifically expressed in flowers.

The protein localises to the cytoplasm. It localises to the cytosol. The catalysed reaction is a 1,2-diacyl-sn-glycero-3-phosphocholine + H2O = phosphocholine + a 1,2-diacyl-sn-glycerol + H(+). In terms of biological role, non-specific phospholipase C (PLC) which assumes minor PLC activity during inorganic phosphate starvation. Can hydrolyze both phosphatidylcholine (PC) and phosphatidylethanolamine (PE). Required for normal accumulation of digalactosyldiacylglycerol (DGDG) during phosphate limitation and may contribute to the conversion of phospholipids to diacylglycerol, the substrate for galactolipid synthesis. The polypeptide is Non-specific phospholipase C5 (NPC5) (Arabidopsis thaliana (Mouse-ear cress)).